The chain runs to 268 residues: Nuclear protein UL4 homolog (268 aa).

It belongs to the alphaherpesvirinae HHV-1 UL4 family.

The protein resides in the host nucleus. This is Nuclear protein UL4 homolog (MDV016) from Gallid herpesvirus 2 (strain Chicken/Md5/ATCC VR-987) (GaHV-2).